Here is a 227-residue protein sequence, read N- to C-terminus: Ribosomal RNA large subunit methyltransferase E (227 aa).

5 residues coordinate S-adenosyl-L-methionine: Gly-78, Trp-80, Asp-103, Asp-119, and Asp-143. The Proton acceptor role is filled by Lys-183.

The protein belongs to the class I-like SAM-binding methyltransferase superfamily. RNA methyltransferase RlmE family.

Its subcellular location is the cytoplasm. It catalyses the reaction uridine(2552) in 23S rRNA + S-adenosyl-L-methionine = 2'-O-methyluridine(2552) in 23S rRNA + S-adenosyl-L-homocysteine + H(+). Specifically methylates the uridine in position 2552 of 23S rRNA at the 2'-O position of the ribose in the fully assembled 50S ribosomal subunit. This is Ribosomal RNA large subunit methyltransferase E from Rickettsia rickettsii (strain Iowa).